A 339-amino-acid chain; its full sequence is UDP-N-acetylenolpyruvoylglucosamine reductase (339 aa).

An FAD-binding PCMH-type domain is found at 18 to 189 (GVEVKAKWFA…LRVRFALNRV (172 aa)). R166 is a catalytic residue. The Proton donor role is filled by S239. E335 is an active-site residue.

It belongs to the MurB family. FAD serves as cofactor.

It localises to the cytoplasm. The catalysed reaction is UDP-N-acetyl-alpha-D-muramate + NADP(+) = UDP-N-acetyl-3-O-(1-carboxyvinyl)-alpha-D-glucosamine + NADPH + H(+). It functions in the pathway cell wall biogenesis; peptidoglycan biosynthesis. Cell wall formation. This chain is UDP-N-acetylenolpyruvoylglucosamine reductase, found in Pseudomonas fluorescens (strain ATCC BAA-477 / NRRL B-23932 / Pf-5).